The following is a 306-amino-acid chain: Secretory carrier-associated membrane protein 1 (306 aa).

Residues 1 to 66 (MAGRYDSNPF…LPPEPAAFGA (66 aa)) form a disordered region. At 1–141 (MAGRYDSNPF…EIPSHLQRMQ (141 aa)) the chain is on the cytoplasmic side. Residues 25 to 36 (KAGGQPSYGGGA) show a composition bias toward gly residues. A compositionally biased stretch (low complexity) spans 40–55 (PNPRNVPSVSSNSRLS). A coiled-coil region spans residues 72–109 (LDSSKDLKNREKELQAREAELNKREKELKRREEAAARA). 4 consecutive transmembrane segments (helical) span residues 142-162 (YVAF…VIAV), 174-194 (IWLL…VLWY), 209-229 (FGLF…SAVA), and 257-277 (IFYF…IWVI). At 278 to 306 (QQVYMYFRGSGKAAEMKRDATRGAMRAAF) the chain is on the cytoplasmic side.

Belongs to the SCAMP family.

The protein localises to the cell membrane. Its subcellular location is the cytoplasmic vesicle. It localises to the secretory vesicle membrane. Probably involved in membrane trafficking. The sequence is that of Secretory carrier-associated membrane protein 1 (SCAMP1) from Oryza sativa subsp. japonica (Rice).